Here is a 121-residue protein sequence, read N- to C-terminus: Large ribosomal subunit protein uL22 (121 aa).

The protein belongs to the universal ribosomal protein uL22 family. Part of the 50S ribosomal subunit.

Functionally, this protein binds specifically to 23S rRNA; its binding is stimulated by other ribosomal proteins, e.g. L4, L17, and L20. It is important during the early stages of 50S assembly. It makes multiple contacts with different domains of the 23S rRNA in the assembled 50S subunit and ribosome. In terms of biological role, the globular domain of the protein is located near the polypeptide exit tunnel on the outside of the subunit, while an extended beta-hairpin is found that lines the wall of the exit tunnel in the center of the 70S ribosome. The polypeptide is Large ribosomal subunit protein uL22 (Rickettsia massiliae (strain Mtu5)).